The sequence spans 272 residues: 4-hydroxy-tetrahydrodipicolinate reductase (272 aa).

NAD(+) is bound by residues 11–16 (GVSGRM) and Glu37. Arg38 provides a ligand contact to NADP(+). Residues 101-103 (GTT) and 125-128 (AGNM) contribute to the NAD(+) site. The active-site Proton donor/acceptor is the His158. His159 is a binding site for (S)-2,3,4,5-tetrahydrodipicolinate. The Proton donor role is filled by Lys162. 168–169 (GT) serves as a coordination point for (S)-2,3,4,5-tetrahydrodipicolinate.

This sequence belongs to the DapB family.

The protein localises to the cytoplasm. It catalyses the reaction (S)-2,3,4,5-tetrahydrodipicolinate + NAD(+) + H2O = (2S,4S)-4-hydroxy-2,3,4,5-tetrahydrodipicolinate + NADH + H(+). The enzyme catalyses (S)-2,3,4,5-tetrahydrodipicolinate + NADP(+) + H2O = (2S,4S)-4-hydroxy-2,3,4,5-tetrahydrodipicolinate + NADPH + H(+). The protein operates within amino-acid biosynthesis; L-lysine biosynthesis via DAP pathway; (S)-tetrahydrodipicolinate from L-aspartate: step 4/4. Its function is as follows. Catalyzes the conversion of 4-hydroxy-tetrahydrodipicolinate (HTPA) to tetrahydrodipicolinate. This Roseobacter denitrificans (strain ATCC 33942 / OCh 114) (Erythrobacter sp. (strain OCh 114)) protein is 4-hydroxy-tetrahydrodipicolinate reductase.